Reading from the N-terminus, the 156-residue chain is Cyanate hydratase (156 aa).

Catalysis depends on residues Arg-96, Glu-99, and Ser-122.

It belongs to the cyanase family.

The catalysed reaction is cyanate + hydrogencarbonate + 3 H(+) = NH4(+) + 2 CO2. In terms of biological role, catalyzes the reaction of cyanate with bicarbonate to produce ammonia and carbon dioxide. This Photorhabdus laumondii subsp. laumondii (strain DSM 15139 / CIP 105565 / TT01) (Photorhabdus luminescens subsp. laumondii) protein is Cyanate hydratase.